The primary structure comprises 168 residues: uncharacterized protein (168 aa).

Residues 1 to 166 (MRVLILAENE…FCGELIKILK (166 aa)) form the PfpI endopeptidase domain.

It belongs to the peptidase C56 family.

This is an uncharacterized protein from Archaeoglobus fulgidus (strain ATCC 49558 / DSM 4304 / JCM 9628 / NBRC 100126 / VC-16).